The following is a 142-amino-acid chain: MAEEKKTRTLEQIQDEIRSYLGEIEYLRSQVGVIDATITDLRTVDATLAYLKEKGKGKEIYIPLGSGVAIRGKIENPDDVIMDVGAGILVGATVDEARENIEKRIKALMDLRLALLRKIEEDTRKVNELLKELQEMQPEKRE.

Belongs to the prefoldin subunit alpha family. As to quaternary structure, heterohexamer of two alpha and four beta subunits.

It is found in the cytoplasm. Functionally, molecular chaperone capable of stabilizing a range of proteins. Seems to fulfill an ATP-independent, HSP70-like function in archaeal de novo protein folding. The protein is Prefoldin subunit alpha 2 of Thermococcus kodakarensis (strain ATCC BAA-918 / JCM 12380 / KOD1) (Pyrococcus kodakaraensis (strain KOD1)).